A 232-amino-acid polypeptide reads, in one-letter code: Aquaporin Z 2 (232 aa).

2 helical membrane-spanning segments follow: residues 9 to 29 (FLGT…ASAF) and 32 to 52 (VGIG…TMAY). An NPA 1 motif is present at residues 63-65 (NPA). 3 consecutive transmembrane segments (helical) span residues 82 to 102 (VSYV…LYVI), 129 to 149 (LTAA…IILG), and 158 to 178 (GFAP…SIPV). Positions 184–186 (NPA) match the NPA 2 motif. A helical transmembrane segment spans residues 200-220 (LSQLWLFWIAPLFGAAIAGIV).

The protein belongs to the MIP/aquaporin (TC 1.A.8) family. Homotetramer.

It is found in the cell inner membrane. The enzyme catalyses H2O(in) = H2O(out). In terms of biological role, channel that permits osmotically driven movement of water in both directions. It is involved in the osmoregulation and in the maintenance of cell turgor during volume expansion in rapidly growing cells. It mediates rapid entry or exit of water in response to abrupt changes in osmolarity. This Rhizobium meliloti (strain 1021) (Ensifer meliloti) protein is Aquaporin Z 2.